A 236-amino-acid polypeptide reads, in one-letter code: Phosphoribosylformylglycinamidine synthase subunit PurQ (236 aa).

In terms of domain architecture, Glutamine amidotransferase type-1 spans 2 to 234; it reads RFAVVTFPGS…LSVGLEVAHS (233 aa). Cys-86 (nucleophile) is an active-site residue. Catalysis depends on residues His-203 and Glu-205.

As to quaternary structure, part of the FGAM synthase complex composed of 1 PurL, 1 PurQ and 2 PurS subunits.

Its subcellular location is the cytoplasm. The catalysed reaction is N(2)-formyl-N(1)-(5-phospho-beta-D-ribosyl)glycinamide + L-glutamine + ATP + H2O = 2-formamido-N(1)-(5-O-phospho-beta-D-ribosyl)acetamidine + L-glutamate + ADP + phosphate + H(+). It carries out the reaction L-glutamine + H2O = L-glutamate + NH4(+). The protein operates within purine metabolism; IMP biosynthesis via de novo pathway; 5-amino-1-(5-phospho-D-ribosyl)imidazole from N(2)-formyl-N(1)-(5-phospho-D-ribosyl)glycinamide: step 1/2. Functionally, part of the phosphoribosylformylglycinamidine synthase complex involved in the purines biosynthetic pathway. Catalyzes the ATP-dependent conversion of formylglycinamide ribonucleotide (FGAR) and glutamine to yield formylglycinamidine ribonucleotide (FGAM) and glutamate. The FGAM synthase complex is composed of three subunits. PurQ produces an ammonia molecule by converting glutamine to glutamate. PurL transfers the ammonia molecule to FGAR to form FGAM in an ATP-dependent manner. PurS interacts with PurQ and PurL and is thought to assist in the transfer of the ammonia molecule from PurQ to PurL. This is Phosphoribosylformylglycinamidine synthase subunit PurQ from Thermomicrobium roseum (strain ATCC 27502 / DSM 5159 / P-2).